We begin with the raw amino-acid sequence, 116 residues long: DNA-directed RNA polymerase subunit omega (116 aa).

This sequence belongs to the RNA polymerase subunit omega family. The RNAP catalytic core consists of 2 alpha, 1 beta, 1 beta' and 1 omega subunit. When a sigma factor is associated with the core the holoenzyme is formed, which can initiate transcription.

The catalysed reaction is RNA(n) + a ribonucleoside 5'-triphosphate = RNA(n+1) + diphosphate. In terms of biological role, promotes RNA polymerase assembly. Latches the N- and C-terminal regions of the beta' subunit thereby facilitating its interaction with the beta and alpha subunits. In Hyphomonas neptunium (strain ATCC 15444), this protein is DNA-directed RNA polymerase subunit omega.